Consider the following 285-residue polypeptide: Transcription factor MYB15 (285 aa).

HTH myb-type domains follow at residues 9–61 (KMGL…MNYL) and 62–116 (KPDI…KKRL). DNA-binding regions (H-T-H motif) lie at residues 37-61 (WRALPKQAGLLRCGKSCRLRWMNYL) and 89-112 (WSAIAAKLPGRTDNEIKNVWHTHL). A disordered region spans residues 115–172 (RLEDYQPAKPKTSNKKKGTKPKSESVITSSNSTRSESELADSSNPSGESLFSTSPSTS). Residues 139–158 (SVITSSNSTRSESELADSSN) show a composition bias toward polar residues. The segment covering 159–172 (PSGESLFSTSPSTS) has biased composition (low complexity).

Interacts with SCRM/ICE1. Expressed in roots, leaves, stems and flowers. Expressed in stomatal guard cells.

Its subcellular location is the nucleus. Functionally, transcription factor involved in cold-regulation of CBF genes and in the development of freezing tolerance. May be part of a complex network of transcription factors controlling the expression of CBF genes and other genes in response to cold stress. Binds to the MYB recognition sequences in the promoters of CBF1, CBF2 and CBF3 genes. Involved in drought and salt tolerance. May enhance expression levels of genes involved in abscisic acid (ABA) biosynthesis and signaling, as well as those encoding stress-protective proteins. The protein is Transcription factor MYB15 of Arabidopsis thaliana (Mouse-ear cress).